A 398-amino-acid chain; its full sequence is Histone-lysine N-methyltransferase ASHR2 (398 aa).

The SET domain occupies 11–270 (TLLRVAEIGG…EGREVCLSYF (260 aa)).

Belongs to the class V-like SAM-binding methyltransferase superfamily. Histone-lysine methyltransferase family. SET2 subfamily.

Its subcellular location is the nucleus. It is found in the chromosome. The enzyme catalyses L-lysyl-[histone] + S-adenosyl-L-methionine = N(6)-methyl-L-lysyl-[histone] + S-adenosyl-L-homocysteine + H(+). Its function is as follows. Histone methyltransferase. This is Histone-lysine N-methyltransferase ASHR2 (ASHR2) from Arabidopsis thaliana (Mouse-ear cress).